Reading from the N-terminus, the 498-residue chain is Glycerol kinase (498 aa).

Thr-12 is an ADP binding site. The ATP site is built by Thr-12, Thr-13, and Ser-14. Thr-12 contacts sn-glycerol 3-phosphate. Arg-16 contributes to the ADP binding site. Residues Arg-82, Glu-83, Tyr-134, and Asp-244 each contribute to the sn-glycerol 3-phosphate site. Residues Arg-82, Glu-83, Tyr-134, Asp-244, and Gln-245 each contribute to the glycerol site. ADP is bound by residues Thr-266 and Gly-309. Residues Thr-266, Gly-309, Gln-313, and Gly-410 each contribute to the ATP site. Gly-410 and Asn-414 together coordinate ADP.

The protein belongs to the FGGY kinase family. In terms of assembly, homotetramer and homodimer (in equilibrium).

The enzyme catalyses glycerol + ATP = sn-glycerol 3-phosphate + ADP + H(+). It participates in polyol metabolism; glycerol degradation via glycerol kinase pathway; sn-glycerol 3-phosphate from glycerol: step 1/1. With respect to regulation, activated by phosphorylation and inhibited by fructose 1,6-bisphosphate (FBP). In terms of biological role, key enzyme in the regulation of glycerol uptake and metabolism. Catalyzes the phosphorylation of glycerol to yield sn-glycerol 3-phosphate. This chain is Glycerol kinase, found in Natranaerobius thermophilus (strain ATCC BAA-1301 / DSM 18059 / JW/NM-WN-LF).